Reading from the N-terminus, the 273-residue chain is Putative phosphoenolpyruvate synthase regulatory protein (273 aa).

153–160 (GVSRCGKT) is a binding site for ADP.

This sequence belongs to the pyruvate, phosphate/water dikinase regulatory protein family. PSRP subfamily.

The catalysed reaction is [pyruvate, water dikinase] + ADP = [pyruvate, water dikinase]-phosphate + AMP + H(+). The enzyme catalyses [pyruvate, water dikinase]-phosphate + phosphate + H(+) = [pyruvate, water dikinase] + diphosphate. Its function is as follows. Bifunctional serine/threonine kinase and phosphorylase involved in the regulation of the phosphoenolpyruvate synthase (PEPS) by catalyzing its phosphorylation/dephosphorylation. The chain is Putative phosphoenolpyruvate synthase regulatory protein from Yersinia enterocolitica serotype O:8 / biotype 1B (strain NCTC 13174 / 8081).